Consider the following 101-residue polypeptide: DNA-binding protein Fis (101 aa).

A DNA-binding region (H-T-H motif) is located at residues 77 to 96; the sequence is QTRAANMLGINRGTLRKKLK.

It belongs to the transcriptional regulatory Fis family. As to quaternary structure, homodimer.

Functionally, activates ribosomal RNA transcription. Plays a direct role in upstream activation of rRNA promoters. The sequence is that of DNA-binding protein Fis from Shewanella amazonensis (strain ATCC BAA-1098 / SB2B).